We begin with the raw amino-acid sequence, 241 residues long: Proteasome subunit alpha type-5 (241 aa).

This sequence belongs to the peptidase T1A family. As to quaternary structure, the 26S proteasome consists of a 20S proteasome core and two 19S regulatory subunits. The 20S proteasome core is composed of 28 subunits that are arranged in four stacked rings, resulting in a barrel-shaped structure. The two end rings are each formed by seven alpha subunits, and the two central rings are each formed by seven beta subunits. The catalytic chamber with the active sites is on the inside of the barrel.

It localises to the cytoplasm. The protein localises to the nucleus. The proteasome is a multicatalytic proteinase complex which is characterized by its ability to cleave peptides with Arg, Phe, Tyr, Leu, and Glu adjacent to the leaving group at neutral or slightly basic pH. The proteasome has an ATP-dependent proteolytic activity. This is Proteasome subunit alpha type-5 (psmA5) from Dictyostelium discoideum (Social amoeba).